The primary structure comprises 464 residues: Protein FAM90A23 (464 aa).

3 disordered regions span residues 1–42, 69–389, and 415–437; these read MMAR…DPRL, VPAT…HDGA, and HSPE…SEAP. Composition is skewed to basic and acidic residues over residues 74-89 and 97-114; these read GKKE…KPRA and NKDK…DPQR. Positions 180–197 are enriched in low complexity; the sequence is LASLSPLRKASLSSSSSL.

Belongs to the FAM90 family.

This chain is Protein FAM90A23, found in Homo sapiens (Human).